Reading from the N-terminus, the 687-residue chain is Sphingoid long chain base kinase 5 (687 aa).

The interval 1 to 20 is disordered; the sequence is MTLKPSKRRKGRSRHSRKKQ. 2 S-palmitoyl cysteine; by AKR1 lipidation sites follow: C91 and C94. Basic and acidic residues predominate over residues 101-116; it reads IDRSETSTTDTSKDDL. Disordered stretches follow at residues 101-130 and 180-207; these read IDRS…VNGQ and DELE…SLLT. Low complexity predominate over residues 193 to 207; it reads NSLSRGSNSSSSLLT. The 140-residue stretch at 266–405 folds into the DAGKc domain; it reads RRNKSIFVII…IDLMCCSQPS (140 aa). Residues 276–278 and T308 contribute to the ATP site; that span reads NPF. Residue 333 to 336 coordinates substrate; the sequence is SGDG. The Proton donor/acceptor role is filled by D335. Residues E340, 366–368, R434, and R440 each bind ATP; that span reads GSG. Residues 506–524 are compositionally biased toward acidic residues; that stretch reads EYETENEDEDEDADADDED. The tract at residues 506–525 is disordered; sequence EYETENEDEDEDADADDEDS. An ATP-binding site is contributed by 652–654; the sequence is DGE.

The protein localises to the golgi apparatus membrane. The enzyme catalyses (4R)-hydroxysphinganine + ATP = (4R)-hydroxysphinganine 1-phosphate + ADP + H(+). It catalyses the reaction a sphingoid base + ATP = a sphingoid 1-phosphate + ADP + H(+). The catalysed reaction is sphinganine + ATP = sphinganine 1-phosphate + ADP + H(+). In terms of biological role, catalyzes the phosphorylation of the sphingoid long chain bases dihydrosphingosine (DHS or sphinganine) and phytosphingosine (PHS) to form dihydrosphingosine 1-phosphate (DHS-1P) and phytosphingosine 1-phosphate (PHS-1P) respectively. Redundant to LCB4, is only responsible for few percent of the total activity. Involved in the biosynthesis of sphingolipids and ceramides. Involved in heat-induced transient cell cycle arrest. Accumulation of phosphorylated sphingoid long chain bases (LCBPs) stimulates calcium influx and activates calcineurin signaling. Involved in heat-stress resistance. The protein is Sphingoid long chain base kinase 5 (LCB5) of Saccharomyces cerevisiae (strain ATCC 204508 / S288c) (Baker's yeast).